The primary structure comprises 435 residues: uncharacterized protein (435 aa).

11 helical membrane passes run 9–29 (IIVLFGSFAIILAVGVPITFA), 57–77 (VGLDGFTLLAIPFFVLAGNIM), 110–130 (TLFGAISGSAVASAAAVGGIM), 146–166 (AINVASAPIGLMIPPSNVLIV), 176–196 (VAALFLAGYLPGILTALALMT), 226–246 (LPSLLLIFIIIGGIIGGVFTP), 280–300 (VVTSSIVLLLVGCSMGMSWAM), 321–341 (WVILLIINLILLFVGTFMDIT), 343–363 (AILIFTPIFLPIAQHLGIDPV), 367–387 (IIMVFNLTIGLCTPPVGTILF), and 408–428 (FLALFVVMAMICYFPQLSLLL).

It belongs to the YiaN/YgiK family.

The protein resides in the cell inner membrane. This is an uncharacterized protein from Salmonella typhimurium (strain LT2 / SGSC1412 / ATCC 700720).